The chain runs to 188 residues: Inner membrane-spanning protein YciB (188 aa).

5 helical membrane-spanning segments follow: residues 22-42 (IYIA…VTWM), 50-70 (MTLV…VFHN), 72-92 (LFIK…LLVS), 121-141 (FAWA…AFWL), and 149-169 (FKVF…GVYI).

It belongs to the YciB family.

It is found in the cell inner membrane. Its function is as follows. Plays a role in cell envelope biogenesis, maintenance of cell envelope integrity and membrane homeostasis. The protein is Inner membrane-spanning protein YciB of Pectobacterium carotovorum subsp. carotovorum (strain PC1).